Consider the following 259-residue polypeptide: Small ribosomal subunit protein eS1 (259 aa).

This sequence belongs to the eukaryotic ribosomal protein eS1 family. In terms of assembly, component of the small ribosomal subunit. Mature ribosomes consist of a small (40S) and a large (60S) subunit. The 40S subunit contains about 33 different proteins and 1 molecule of RNA (18S). The 60S subunit contains about 49 different proteins and 3 molecules of RNA (25S, 5.8S and 5S).

It is found in the cytoplasm. This is Small ribosomal subunit protein eS1 from Monosiga brevicollis (Choanoflagellate).